The primary structure comprises 116 residues: HTH-type transcriptional regulator SarV (116 aa).

Positions 51 to 74 form a DNA-binding region, H-T-H motif; sequence RDTLHFEMLWDTSKIDVIIRKIYK.

It belongs to the SarA family.

The protein localises to the cytoplasm. Functionally, part of the pathway by which MgrA and SarA control autolysis. In Staphylococcus aureus (strain Mu50 / ATCC 700699), this protein is HTH-type transcriptional regulator SarV (sarV).